The chain runs to 361 residues: S-adenosylmethionine:tRNA ribosyltransferase-isomerase (361 aa).

The protein belongs to the QueA family. In terms of assembly, monomer.

The protein resides in the cytoplasm. The enzyme catalyses 7-aminomethyl-7-carbaguanosine(34) in tRNA + S-adenosyl-L-methionine = epoxyqueuosine(34) in tRNA + adenine + L-methionine + 2 H(+). Its pathway is tRNA modification; tRNA-queuosine biosynthesis. In terms of biological role, transfers and isomerizes the ribose moiety from AdoMet to the 7-aminomethyl group of 7-deazaguanine (preQ1-tRNA) to give epoxyqueuosine (oQ-tRNA). In Rhizobium johnstonii (strain DSM 114642 / LMG 32736 / 3841) (Rhizobium leguminosarum bv. viciae), this protein is S-adenosylmethionine:tRNA ribosyltransferase-isomerase.